We begin with the raw amino-acid sequence, 161 residues long: Vitamin K epoxide reductase complex subunit 1 (161 aa).

Residues 1 to 9 (MGTTWRSPG) lie on the Cytoplasmic side of the membrane. The helical transmembrane segment at 10-29 (RLRLALCLAGLALSLYALHV) threads the bilayer. Residues 30 to 80 (KAARARNEDYRALCDVGTAISCSRVFSSRWGRGFGLVEHVLGADSILNQSN) are Lumenal-facing. A disulfide bond links Cys-43 and Cys-51. Asn-80 is a binding site for (S)-warfarin. A helical membrane pass occupies residues 81 to 95 (SIFGCMFYTIQLLLG). The Cytoplasmic segment spans residues 96–100 (CLRGR). The chain crosses the membrane as a helical span at residues 101-128 (WASILLILSSLVSVAGSLYLAWILFFVL). Residues 129–131 (YDF) are Lumenal-facing. Cysteines 132 and 135 form a disulfide. The chain crosses the membrane as a helical span at residues 132 to 153 (CIVCITTYAINAGLMLLSFQKV). Phylloquinone is bound by residues Cys-135 and Tyr-139. Position 139 (Tyr-139) interacts with (S)-warfarin. Residues 154-161 (PEHKVKKP) lie on the Cytoplasmic side of the membrane.

Belongs to the VKOR family. As to expression, highly expressed in liver. Detected at lower levels in lung, kidney and testis.

It localises to the endoplasmic reticulum membrane. It carries out the reaction phylloquinone + [protein]-disulfide + H2O = 2,3-epoxyphylloquinone + [protein]-dithiol. The enzyme catalyses phylloquinol + [protein]-disulfide = phylloquinone + [protein]-dithiol. With respect to regulation, inhibited by warfarin (coumadin). Warfarin locks VKORC1 in both redox states into the closed conformation. Its function is as follows. Involved in vitamin K metabolism. Catalytic subunit of the vitamin K epoxide reductase (VKOR) complex which reduces inactive vitamin K 2,3-epoxide to active vitamin K. Vitamin K is required for the gamma-carboxylation of various proteins, including clotting factors, and is required for normal blood coagulation, but also for normal bone development. This is Vitamin K epoxide reductase complex subunit 1 (Vkorc1) from Rattus norvegicus (Rat).